The chain runs to 1207 residues: Ras GTPase-activating protein gap-2 (1207 aa).

2 disordered regions span residues 1 to 29 (MKVI…SCTK) and 221 to 316 (RMSS…GSLR). In terms of domain architecture, PH spans 40–383 (PPICHGWLIV…WMENLRKTMN (344 aa)). Residues 223-236 (SSSSHNLSTRLSGS) are compositionally biased toward low complexity. Composition is skewed to polar residues over residues 237-247 (TQNLNQPTNAY) and 286-297 (ASNTPSRDSSLY). In terms of domain architecture, C2 spans 374–490 (WMENLRKTMN…SSRSPVERWY (117 aa)). The span at 495 to 504 (SHSDSGTSRI) shows a compositional bias: polar residues. The disordered stretch occupies residues 495–516 (SHSDSGTSRIASALGGKSSSQE). The Ras-GAP domain maps to 579-789 (NLAKEFLCDL…HRMKDFLLRI (211 aa)). 4 disordered regions span residues 856 to 903 (GVFH…LGRS), 923 to 1013 (FQTP…SSSS), 1086 to 1107 (ATGG…RASR), and 1163 to 1207 (LKSK…VVPN). Composition is skewed to polar residues over residues 862–876 (MVQQ…SPQQ) and 891–903 (TPPT…LGRS). Over residues 939 to 953 (TGTSSSRTSDKTTSS) the composition is skewed to low complexity. Residues 955 to 972 (EIRDDTDSDFELREDRGR) are compositionally biased toward basic and acidic residues. The segment covering 985-1013 (ASPSSSQQASSGYLSNNPSRSSYSNSSSS) has biased composition (low complexity). A compositionally biased stretch (low complexity) spans 1181-1207 (SGASEDSYDSLSSLDRPSRQSLVVVPN).

In terms of tissue distribution, mainly expressed in gonads and vulval cells. Isoform c in expressed in pharyngeal epithelial cells and several rectal/blast cells in the tail region. Isoform f is weakly expressed in four cells symmetrically located in the vulval region. Isoform g is strongly expressed in the pharyngeal muscle cells m6 in addition to several cells in the tail region.

It localises to the cytoplasm. In terms of biological role, GTPase-activating protein, which acts as a negative regulator for the member of the Ras family let-60. Probably decreases the signaling activity of Ras by stimulating its intrinsic GTPase activity, thereby lowering the levels of GTP-bound, active Ras. The different isoforms may play a distinct role in specific tissues. This Caenorhabditis elegans protein is Ras GTPase-activating protein gap-2 (gap-2).